The chain runs to 431 residues: Gamma-glutamyl phosphate reductase (431 aa).

Belongs to the gamma-glutamyl phosphate reductase family.

Its subcellular location is the cytoplasm. The enzyme catalyses L-glutamate 5-semialdehyde + phosphate + NADP(+) = L-glutamyl 5-phosphate + NADPH + H(+). The protein operates within amino-acid biosynthesis; L-proline biosynthesis; L-glutamate 5-semialdehyde from L-glutamate: step 2/2. In terms of biological role, catalyzes the NADPH-dependent reduction of L-glutamate 5-phosphate into L-glutamate 5-semialdehyde and phosphate. The product spontaneously undergoes cyclization to form 1-pyrroline-5-carboxylate. The polypeptide is Gamma-glutamyl phosphate reductase (Beijerinckia indica subsp. indica (strain ATCC 9039 / DSM 1715 / NCIMB 8712)).